Reading from the N-terminus, the 725-residue chain is Kinesin-like protein KIN-8A (725 aa).

The segment at 1–32 (MPVSTRSKVMKQERNEQENTNLNLPLRNPHQG) is disordered. The region spanning 151–481 (RILVFVRLRP…LHWADRAKEI (331 aa)) is the Kinesin motor domain. Position 243-250 (243-250 (GATGAGKT)) interacts with ATP. Coiled coils occupy residues 499–541 (EGAD…AANN) and 583–617 (ESLKRTKAEEAVKELQLTVKALKMEMERMKREHGL). Disordered stretches follow at residues 652–672 (GSLRPKEKEKELKSPSHRFAS) and 691–725 (SPALDRRKTRSHGLVHQEAPSKLLQPGFARPHMKH). Positions 655–665 (RPKEKEKELKS) are enriched in basic and acidic residues.

The protein belongs to the TRAFAC class myosin-kinesin ATPase superfamily. Kinesin family. KIN-8 subfamily.

This chain is Kinesin-like protein KIN-8A, found in Arabidopsis thaliana (Mouse-ear cress).